Consider the following 467-residue polypeptide: Gamma-aminobutyric acid receptor subunit gamma-2 (467 aa).

An N-terminal signal peptide occupies residues 1-39 (MSSPNIWSTGSSVYSTPVFSQKMTVWILLLLSLYPGFTS). Residues 40–275 (QKSDDDYEDY…FDLSRRMGYF (236 aa)) lie on the Extracellular side of the membrane. 2 N-linked (GlcNAc...) asparagine glycosylation sites follow: N52 and N129. A disulfide bridge links C190 with C204. N-linked (GlcNAc...) asparagine glycosylation occurs at N247. A helical transmembrane segment spans residues 276-296 (TIQTYIPCTLIVVLSWVSFWI). Over 297-302 (NKDAVP) the chain is Cytoplasmic. The chain crosses the membrane as a helical span at residues 303-322 (ARTSLGITTVLTMTTLSTIA). The Extracellular segment spans residues 323-334 (RKSLPKVSYVTA). Residues 335–359 (MDLFVSVCFIFVFSALVEYGTLHYF) form a helical membrane-spanning segment. At 360-443 (VSNRKPSKDK…IHIRIAKMDS (84 aa)) the chain is on the cytoplasmic side. The segment at 425–442 (RTGAWRHGRIHIRIAKMD) is interaction with GABARAP. A helical membrane pass occupies residues 444 to 464 (YARIFFPTAFCLFNLVYWVSY). Over 465 to 467 (LYL) the chain is Extracellular.

Belongs to the ligand-gated ion channel (TC 1.A.9) family. Gamma-aminobutyric acid receptor (TC 1.A.9.5) subfamily. GABRG2 sub-subfamily. In terms of assembly, heteropentamer, formed by a combination of alpha (GABRA1-6), beta (GABRB1-3), gamma (GABRG1-3), delta (GABRD), epsilon (GABRE), rho (GABRR1-3), pi (GABRP) and theta (GABRQ) chains, each subunit exhibiting distinct physiological and pharmacological properties. Interacts with GABARAP. Interacts with KIF21B. Identified in a complex of 720 kDa composed of LHFPL4, NLGN2, GABRA1, GABRB2, GABRG2 and GABRB3. Interacts with LHFPL4. Interacts with SHISA7; interaction leads to the regulation of GABA(A) receptor trafficking, channel deactivation kinetics and pharmacology. Post-translationally, palmitoylated by ZDHHC3/GODZ; required for the accumulation of GABA(A) receptors at the postsynaptic membrane of inhibitory GABAergic synapses. Glycosylated.

The protein resides in the postsynaptic cell membrane. It localises to the cell membrane. Its subcellular location is the cell projection. The protein localises to the dendrite. It is found in the cytoplasmic vesicle membrane. It catalyses the reaction chloride(in) = chloride(out). Allosterically activated by benzodiazepines. Activated by pentobarbital. Inhibited by the antagonist bicuculline. Inhibited by zinc ions. Potentiated by histamine. Gamma subunit of the heteropentameric ligand-gated chloride channel gated by gamma-aminobutyric acid (GABA), a major inhibitory neurotransmitter in the brain. GABA-gated chloride channels, also named GABA(A) receptors (GABAAR), consist of five subunits arranged around a central pore and contain GABA active binding site(s) located at the alpha and beta subunit interface(s). When activated by GABA, GABAARs selectively allow the flow of chloride anions across the cell membrane down their electrochemical gradient. Gamma-2/GABRG2-containing GABAARs are found at both synaptic and extrasynaptic sites. Chloride influx into the postsynaptic neuron following GABAAR opening decreases the neuron ability to generate a new action potential, thereby reducing nerve transmission. GABAARs containing alpha-1 and beta-2 or -3 subunits exhibit synaptogenic activity; the gamma-2 subunit being necessary but not sufficient to induce rapid synaptic contacts formation. Extrasynaptic gamma-2-containing receptors contribute to the tonic GABAergic inhibition. GABAARs function also as histamine receptor where histamine binds at the interface of two neighboring beta subunits and potentiates GABA response in a gamma-2 subunit-controlled manner. The chain is Gamma-aminobutyric acid receptor subunit gamma-2 (GABRG2) from Pongo abelii (Sumatran orangutan).